A 63-amino-acid chain; its full sequence is Large ribosomal subunit protein uL30 (63 aa).

The protein belongs to the universal ribosomal protein uL30 family. As to quaternary structure, part of the 50S ribosomal subunit.

The sequence is that of Large ribosomal subunit protein uL30 from Chlorobium chlorochromatii (strain CaD3).